The chain runs to 804 residues: Enhancer of polycomb homolog 2 (804 aa).

4 disordered regions span residues 372–395 (QSSD…ENDP), 484–508 (GFSS…DRHC), 603–624 (QSQQ…SDCM), and 646–669 (PVRS…VQPS). 2 stretches are compositionally biased toward polar residues: residues 611 to 624 (SHPK…SDCM) and 654 to 669 (DQNA…VQPS).

This sequence belongs to the enhancer of polycomb family.

The protein localises to the nucleus. Functionally, may play a role in transcription or DNA repair. This Xenopus laevis (African clawed frog) protein is Enhancer of polycomb homolog 2 (epc2).